Consider the following 989-residue polypeptide: Translation initiation factor IF-2 (989 aa).

Disordered stretches follow at residues 28–60 (GVTK…TDAD) and 97–397 (VRRD…DQNT). Basic and acidic residues-rich tracts occupy residues 40–60 (ETDK…TDAD) and 122–178 (ELQR…EAAK). The span at 182-223 (AAAAEAAAREQQTQASKPAQAAQPAAAKAEPVAAKAAEPVVA) shows a compositional bias: low complexity. A compositionally biased stretch (basic and acidic residues) spans 231–280 (ERAAAERAAQREAAKKAEDAARQAAEKARAEQEEIAKRRAAAEAEARAIR). Low complexity predominate over residues 318 to 345 (RPAGEAPARPAAKKPAAAAPAATTTPSA). Positions 374 to 387 (TSGGVDRGWRGGPK) are enriched in gly residues. The tr-type G domain maps to 489–658 (PRPPVVTVMG…LLQAEVLELK (170 aa)). A G1 region spans residues 498-505 (GHVDHGKT). A GTP-binding site is contributed by 498–505 (GHVDHGKT). Positions 523-527 (GITQH) are G2. A G3 region spans residues 544 to 547 (DTPG). Residues 544–548 (DTPGH) and 598–601 (NKID) contribute to the GTP site. Residues 598 to 601 (NKID) form a G4 region. Positions 634–636 (SAK) are G5.

The protein belongs to the TRAFAC class translation factor GTPase superfamily. Classic translation factor GTPase family. IF-2 subfamily.

The protein localises to the cytoplasm. Its function is as follows. One of the essential components for the initiation of protein synthesis. Protects formylmethionyl-tRNA from spontaneous hydrolysis and promotes its binding to the 30S ribosomal subunits. Also involved in the hydrolysis of GTP during the formation of the 70S ribosomal complex. In Paraburkholderia xenovorans (strain LB400), this protein is Translation initiation factor IF-2.